The sequence spans 101 residues: Iron-sulfur cluster assembly protein CyaY (101 aa).

Belongs to the frataxin family.

Its function is as follows. Involved in iron-sulfur (Fe-S) cluster assembly. May act as a regulator of Fe-S biogenesis. This is Iron-sulfur cluster assembly protein CyaY from Haemophilus influenzae (strain PittEE).